A 90-amino-acid polypeptide reads, in one-letter code: uncharacterized protein (90 aa).

The interval tryptophan 53–valine 90 is disordered. Low complexity predominate over residues aspartate 63–cysteine 74.

This is an uncharacterized protein from Orgyia pseudotsugata (Douglas-fir tussock moth).